A 411-amino-acid chain; its full sequence is MSLLLPTNLQQYPSSSSFPSSTPILSPPPSTAFSVIVPRRRCLRLVTSCVSTVQSSVATNGSSPAPAPAAVVVERDQIRLGLPSKGRMAADAIDLLKDCQLFVKQVNPRQYVAQIPQLPNTEVWFQRPKDIVRKLLSGDLDLGIVGLDTLSEYGQENEDLIIVHEALNFGDCHLSIAIPNYGIFENINSLKELAQMPQWSEERPLRLATGFTYLGPKFMKENGIKHVVFSTADGALEAAPAMGIADAILDLVSSGITLKENNLKEIEGGVVLESQAALVASRRALNERKGALNTVHEILERLEAHLKADGQFTVVANMRGNSAQEVAERVLSQPSLSGLQGPTISPVYCTQNGKVSVDYYAIVICVPKKALYDSVKQLRAAGGSGVLVSPLTYIFDEDTPRWGQLLRNLGI.

A compositionally biased stretch (polar residues) spans 1–12 (MSLLLPTNLQQY). The disordered stretch occupies residues 1-27 (MSLLLPTNLQQYPSSSSFPSSTPILSP). The N-terminal 49 residues, 1–49 (MSLLLPTNLQQYPSSSSFPSSTPILSPPPSTAFSVIVPRRRCLRLVTSC), are a transit peptide targeting the chloroplast. Residues 13-24 (PSSSSFPSSTPI) are compositionally biased toward low complexity. At valine 50 the chain carries N-acetylvaline.

This sequence belongs to the ATP phosphoribosyltransferase family. Long subfamily. Requires Mg(2+) as cofactor. As to expression, expressed in leaves and at lower levels in roots (at protein level).

It is found in the plastid. The protein localises to the chloroplast. The enzyme catalyses 1-(5-phospho-beta-D-ribosyl)-ATP + diphosphate = 5-phospho-alpha-D-ribose 1-diphosphate + ATP. Its pathway is amino-acid biosynthesis; L-histidine biosynthesis; L-histidine from 5-phospho-alpha-D-ribose 1-diphosphate: step 1/9. With respect to regulation, feedback inhibited by L-histidine. Catalyzes the condensation of ATP and 5-phosphoribose 1-diphosphate to form N'-(5'-phosphoribosyl)-ATP (PR-ATP). The sequence is that of ATP phosphoribosyltransferase 1, chloroplastic (HISN1A) from Arabidopsis thaliana (Mouse-ear cress).